The chain runs to 265 residues: Putative cysteine-rich receptor-like protein kinase 9 (265 aa).

The N-terminal stretch at 1-23 (MSSLISFIFLFLFSFLTSFKASA) is a signal peptide. Gnk2-homologous domains follow at residues 27 to 131 (FYLN…DKNI) and 142 to 244 (FILS…LYSF). Asparagine 35, asparagine 60, asparagine 69, asparagine 153, asparagine 177, and asparagine 246 each carry an N-linked (GlcNAc...) asparagine glycan.

The protein belongs to the protein kinase superfamily. Ser/Thr protein kinase family. CRK subfamily.

The protein resides in the secreted. The sequence is that of Putative cysteine-rich receptor-like protein kinase 9 (CRK9) from Arabidopsis thaliana (Mouse-ear cress).